The following is a 242-amino-acid chain: Small ribosomal subunit protein uS2 (242 aa).

This sequence belongs to the universal ribosomal protein uS2 family.

In Pseudoalteromonas translucida (strain TAC 125), this protein is Small ribosomal subunit protein uS2.